Here is a 78-residue protein sequence, read N- to C-terminus: Alpha-neurotoxin homolog 7 (78 aa).

The N-terminal stretch at 1 to 21 is a signal peptide; sequence MKTLLLTLVVVTIVCLDFGYT. 4 disulfides stabilise this stretch: Cys24–Cys42, Cys37–Cys57, Cys59–Cys70, and Cys71–Cys76.

The protein belongs to the three-finger toxin family. Short-chain subfamily. Orphan group XII sub-subfamily. As to expression, expressed by the venom gland.

The protein resides in the secreted. In Micrurus corallinus (Brazilian coral snake), this protein is Alpha-neurotoxin homolog 7.